Here is a 76-residue protein sequence, read N- to C-terminus: Sec-independent protein translocase protein TatA (76 aa).

Residues 1–21 form a helical membrane-spanning segment; the sequence is MGSFSIWHWLIVLLIVVLVFG. The interval 44–76 is disordered; it reads RDGSTAPADPAQQVTANKSADANTVDVEAKQKS. Polar residues predominate over residues 55 to 65; it reads QQVTANKSADA.

Belongs to the TatA/E family. In terms of assembly, the Tat system comprises two distinct complexes: a TatABC complex, containing multiple copies of TatA, TatB and TatC subunits, and a separate TatA complex, containing only TatA subunits. Substrates initially bind to the TatABC complex, which probably triggers association of the separate TatA complex to form the active translocon.

Its subcellular location is the cell inner membrane. Its function is as follows. Part of the twin-arginine translocation (Tat) system that transports large folded proteins containing a characteristic twin-arginine motif in their signal peptide across membranes. TatA could form the protein-conducting channel of the Tat system. This Methylibium petroleiphilum (strain ATCC BAA-1232 / LMG 22953 / PM1) protein is Sec-independent protein translocase protein TatA.